The chain runs to 518 residues: Membrane-bound lytic murein transglycosylase F (518 aa).

Positions 1-21 (MKKLKINYLFIGILALLLAVA) are cleaved as a signal peptide. The non-LT domain stretch occupies residues 22-269 (LWPSIPWFGK…RIEEKYLGHG (248 aa)). The tract at residues 270–518 (DDFDYVDTRT…SRKGSEEKQN (249 aa)) is LT domain. Residue E314 is part of the active site.

The protein in the N-terminal section; belongs to the bacterial solute-binding protein 3 family. It in the C-terminal section; belongs to the transglycosylase Slt family.

Its subcellular location is the cell outer membrane. The catalysed reaction is Exolytic cleavage of the (1-&gt;4)-beta-glycosidic linkage between N-acetylmuramic acid (MurNAc) and N-acetylglucosamine (GlcNAc) residues in peptidoglycan, from either the reducing or the non-reducing ends of the peptidoglycan chains, with concomitant formation of a 1,6-anhydrobond in the MurNAc residue.. Its function is as follows. Murein-degrading enzyme that degrades murein glycan strands and insoluble, high-molecular weight murein sacculi, with the concomitant formation of a 1,6-anhydromuramoyl product. Lytic transglycosylases (LTs) play an integral role in the metabolism of the peptidoglycan (PG) sacculus. Their lytic action creates space within the PG sacculus to allow for its expansion as well as for the insertion of various structures such as secretion systems and flagella. In Escherichia coli O6:H1 (strain CFT073 / ATCC 700928 / UPEC), this protein is Membrane-bound lytic murein transglycosylase F.